Reading from the N-terminus, the 241-residue chain is ATP synthase subunit a (241 aa).

5 consecutive transmembrane segments (helical) span residues 30–50 (GQVF…VLVG), 89–109 (LPFI…GALI), 128–148 (INTT…AGLS), 193–213 (LAVG…VMLL), and 214–234 (GLFT…FYIG).

It belongs to the ATPase A chain family. In terms of assembly, F-type ATPases have 2 components, CF(1) - the catalytic core - and CF(0) - the membrane proton channel. CF(1) has five subunits: alpha(3), beta(3), gamma(1), delta(1), epsilon(1). CF(0) has four main subunits: a, b, b' and c.

The protein resides in the cellular thylakoid membrane. Key component of the proton channel; it plays a direct role in the translocation of protons across the membrane. In Synechococcus sp. (strain CC9902), this protein is ATP synthase subunit a.